Here is a 499-residue protein sequence, read N- to C-terminus: Endoglucanase (499 aa).

A signal peptide spans methionine 1 to alanine 29. Substrate-binding positions include histidine 65, tryptophan 69–tyrosine 70, tyrosine 96, and histidine 131. Glutamate 169 functions as the Proton donor in the catalytic mechanism. Tyrosine 231 is a substrate binding site. The active-site Nucleophile is the glutamate 257. Substrate is bound by residues alanine 263–serine 264, tryptophan 291, and lysine 296–glutamate 298. The CBM3 domain maps to glutamine 350 to asparagine 499.

The protein belongs to the glycosyl hydrolase 5 (cellulase A) family.

The enzyme catalyses Endohydrolysis of (1-&gt;4)-beta-D-glucosidic linkages in cellulose, lichenin and cereal beta-D-glucans.. This Bacillus subtilis (strain 168) protein is Endoglucanase (eglS).